Consider the following 736-residue polypeptide: MKHLIIVESPAKAKTIKNFLDKNYEVIASKGHVRDLSKFALGIKIDETGFTPNYVVDKDHKELVKQIIELSKKASITYIATDEDREGEAIGYHVACLIGGKLESYPRIVFHEITQNAILNALKTPRKIDMSKVNAQQARRFLDRIVGFKLSSLIASKITKGLSAGRVQSAALKLVIDKEREIKAFKPLTYFTLDAYFESHLEAQLISYKGNKLKAQELIDEKKAQEIKNELEKESYAISSIVKKSKKSPTPPPFMTSTLQQSASSLLGFSPTKTMSIAQKLYEGVATPQGVMGVITYMRTDSLNIAKEALEEARNKILKDYGKDYLPPKAKVYSSKNKNAQEAHEAIRPTSIILEPNALKDYLKPEELRLYTLIYKRFLASQMQDALFESQSVVVACEKGEFKASGRKLLFDGYYKILGNDDKDKLLPNLKENDPIKLEKLESNAHVTEPPARYSEASLIKVLESLGIGRPSTYAPTISLLQNRDYIKVEKKQISALESAFKVIEILEKHFEEIVDSKFSASLEEELDNIAQNKADYQQVLKDFYYPFMDKIEAGKKNIISQKVHEKTGQSCPKCGGELVKKNSRYGEFIACNNYPKCKYVKQTESANDEADQELCEKCGGEMVQKFSRNGAFLACNNYPECKNTKSLKNTPNAKETIEGVKCPECGGDIALKRSKKGSFYGCNNYPKCNFLSNHKPINKRCEKCHYLMSERIYRKKKAHECIKCKERVFLEEDNG.

The Toprim domain maps to 2 to 113 (KHLIIVESPA…SYPRIVFHEI (112 aa)). Positions 8 and 82 each coordinate Mg(2+). The 424-residue stretch at 129–552 (DMSKVNAQQA…DFYYPFMDKI (424 aa)) folds into the Topo IA-type catalytic domain. Positions 163-168 (SAGRVQ) are interaction with DNA. The O-(5'-phospho-DNA)-tyrosine intermediate role is filled by Tyr297. 4 C4-type zinc fingers span residues 572–598 (CPKC…YPKC), 616–642 (CEKC…YPEC), 663–689 (CPEC…YPKC), and 702–725 (CEKC…CIKC).

The protein belongs to the type IA topoisomerase family. As to quaternary structure, monomer. Requires Mg(2+) as cofactor.

The catalysed reaction is ATP-independent breakage of single-stranded DNA, followed by passage and rejoining.. Its function is as follows. Releases the supercoiling and torsional tension of DNA, which is introduced during the DNA replication and transcription, by transiently cleaving and rejoining one strand of the DNA duplex. Introduces a single-strand break via transesterification at a target site in duplex DNA. The scissile phosphodiester is attacked by the catalytic tyrosine of the enzyme, resulting in the formation of a DNA-(5'-phosphotyrosyl)-enzyme intermediate and the expulsion of a 3'-OH DNA strand. The free DNA strand then undergoes passage around the unbroken strand, thus removing DNA supercoils. Finally, in the religation step, the DNA 3'-OH attacks the covalent intermediate to expel the active-site tyrosine and restore the DNA phosphodiester backbone. The protein is DNA topoisomerase 1 of Helicobacter pylori (strain ATCC 700392 / 26695) (Campylobacter pylori).